Consider the following 344-residue polypeptide: Zinc metalloproteinase nas-6 (344 aa).

Positions 1 to 19 (MLDHVLLLTYCLVSTVVRS) are cleaved as a signal peptide. The Peptidase M12A domain occupies 72–266 (NALKNKQLTW…VKINKLYSCK (195 aa)). 5 disulfides stabilise this stretch: C114–C265, C135–C154, C300–C334, C307–C327, and C314–C331. Position 162 (H162) interacts with Zn(2+). E163 is a catalytic residue. Positions 166 and 172 each coordinate Zn(2+). Residues 300–334 (CVDHFADCPHFAQYCTRASFFFVMKSYCPFTCKHC) enclose the ShKT domain.

It depends on Zn(2+) as a cofactor. As to expression, expressed in pharyngeal and body wall muscles, intestine, hypodermis and pharyngeal mc2 cells.

The protein localises to the secreted. Metalloprotease. The polypeptide is Zinc metalloproteinase nas-6 (nas-6) (Caenorhabditis elegans).